A 427-amino-acid polypeptide reads, in one-letter code: Gamma-glutamyl phosphate reductase (427 aa).

It belongs to the gamma-glutamyl phosphate reductase family.

It localises to the cytoplasm. It carries out the reaction L-glutamate 5-semialdehyde + phosphate + NADP(+) = L-glutamyl 5-phosphate + NADPH + H(+). Its pathway is amino-acid biosynthesis; L-proline biosynthesis; L-glutamate 5-semialdehyde from L-glutamate: step 2/2. Its function is as follows. Catalyzes the NADPH-dependent reduction of L-glutamate 5-phosphate into L-glutamate 5-semialdehyde and phosphate. The product spontaneously undergoes cyclization to form 1-pyrroline-5-carboxylate. This chain is Gamma-glutamyl phosphate reductase, found in Brucella canis (strain ATCC 23365 / NCTC 10854 / RM-666).